Here is a 201-residue protein sequence, read N- to C-terminus: Recombination protein RecR (201 aa).

The C4-type zinc-finger motif lies at 60-75; it reads CSCCGNVDTIDPCTVC. The region spanning 83 to 178 is the Toprim domain; it reads SVIIVVEDVA…KITRLAHGVP (96 aa).

The protein belongs to the RecR family.

In terms of biological role, may play a role in DNA repair. It seems to be involved in an RecBC-independent recombinational process of DNA repair. It may act with RecF and RecO. In Sinorhizobium fredii (strain NBRC 101917 / NGR234), this protein is Recombination protein RecR.